The sequence spans 438 residues: UPF0229 protein R01398 (438 aa).

The disordered stretch occupies residues 55-107; that stretch reads PARGVNEPAFQPDSNSGERRHVLPGNREFAAGDRIPKRGSGGGAGNAGAGTGQ. Gly residues predominate over residues 93–105; it reads GSGGGAGNAGAGT.

Belongs to the UPF0229 family.

This Rhizobium meliloti (strain 1021) (Ensifer meliloti) protein is UPF0229 protein R01398.